We begin with the raw amino-acid sequence, 548 residues long: ComP-specific O-oligosaccharyltransferase (548 aa).

The next 12 membrane-spanning stretches (helical) occupy residues 8–28 (IKNY…IIPN), 32–52 (LSST…LLTV), 68–88 (WFLF…IYFF), 91–111 (FFFS…GFNE), 119–139 (IVKK…LIAI), 164–184 (LGQP…LCYL), 189–209 (SLNN…NVMT), 213–233 (SAWI…QKKI), 239–259 (IFFN…FNLI), 331–351 (MLWN…CFLI), 363–383 (LFLF…YPFA), and 418–438 (TLFL…VLDI).

It belongs to the PglL O-oligosaccharyltransferase family.

It localises to the cell membrane. Specifically catalyzes the glycosylation of the pilin-like competence factor ComP. The protein is ComP-specific O-oligosaccharyltransferase of Acinetobacter baylyi (strain ATCC 33305 / BD413 / ADP1).